The sequence spans 431 residues: Serine--tRNA ligase (431 aa).

Residue 235-237 coordinates L-serine; it reads TAE. ATP is bound by residues 266-268 and V282; that span reads RRE. E289 contacts L-serine. Residue 353–356 participates in ATP binding; the sequence is EASS. S389 contacts L-serine.

This sequence belongs to the class-II aminoacyl-tRNA synthetase family. Type-1 seryl-tRNA synthetase subfamily. In terms of assembly, homodimer. The tRNA molecule binds across the dimer.

It localises to the cytoplasm. It carries out the reaction tRNA(Ser) + L-serine + ATP = L-seryl-tRNA(Ser) + AMP + diphosphate + H(+). The enzyme catalyses tRNA(Sec) + L-serine + ATP = L-seryl-tRNA(Sec) + AMP + diphosphate + H(+). Its pathway is aminoacyl-tRNA biosynthesis; selenocysteinyl-tRNA(Sec) biosynthesis; L-seryl-tRNA(Sec) from L-serine and tRNA(Sec): step 1/1. Functionally, catalyzes the attachment of serine to tRNA(Ser). Is also able to aminoacylate tRNA(Sec) with serine, to form the misacylated tRNA L-seryl-tRNA(Sec), which will be further converted into selenocysteinyl-tRNA(Sec). The protein is Serine--tRNA ligase of Prosthecochloris aestuarii (strain DSM 271 / SK 413).